A 299-amino-acid chain; its full sequence is Probable lipid kinase YegS (299 aa).

The 132-residue stretch at 2–133 (AEFPASLLIL…IDMAQVNKQT (132 aa)) folds into the DAGKc domain. Residues Thr-40, 66–72 (GDGTINE), and Thr-95 each bind ATP. Mg(2+) contacts are provided by Leu-215, Asp-218, and Leu-220. Glu-271 serves as the catalytic Proton acceptor.

This sequence belongs to the diacylglycerol/lipid kinase family. YegS lipid kinase subfamily. Requires Mg(2+) as cofactor. The cofactor is Ca(2+).

The protein resides in the cytoplasm. Its function is as follows. Probably phosphorylates lipids; the in vivo substrate is unknown. The sequence is that of Probable lipid kinase YegS from Shigella dysenteriae serotype 1 (strain Sd197).